The chain runs to 204 residues: Holliday junction branch migration complex subunit RuvA (204 aa).

The domain I stretch occupies residues 1–63 (MIGWLQGRVL…EDGQFLYGFS (63 aa)). Positions 64-142 (SFLQRQLFRE…KNDLFLCDES (79 aa)) are domain II. The interval 143–152 (ESSRAPIALS) is flexible linker. The segment at 152–204 (SASEEAIQALIALELAPAEAELWVKKAQKTLAEDADSAALIKTAFALRLQGAK) is domain III.

This sequence belongs to the RuvA family. In terms of assembly, homotetramer. Forms an RuvA(8)-RuvB(12)-Holliday junction (HJ) complex. HJ DNA is sandwiched between 2 RuvA tetramers; dsDNA enters through RuvA and exits via RuvB. An RuvB hexamer assembles on each DNA strand where it exits the tetramer. Each RuvB hexamer is contacted by two RuvA subunits (via domain III) on 2 adjacent RuvB subunits; this complex drives branch migration. In the full resolvosome a probable DNA-RuvA(4)-RuvB(12)-RuvC(2) complex forms which resolves the HJ.

Its subcellular location is the cytoplasm. The RuvA-RuvB-RuvC complex processes Holliday junction (HJ) DNA during genetic recombination and DNA repair, while the RuvA-RuvB complex plays an important role in the rescue of blocked DNA replication forks via replication fork reversal (RFR). RuvA specifically binds to HJ cruciform DNA, conferring on it an open structure. The RuvB hexamer acts as an ATP-dependent pump, pulling dsDNA into and through the RuvAB complex. HJ branch migration allows RuvC to scan DNA until it finds its consensus sequence, where it cleaves and resolves the cruciform DNA. This chain is Holliday junction branch migration complex subunit RuvA, found in Dichelobacter nodosus (strain VCS1703A).